A 438-amino-acid chain; its full sequence is Transposon Ty2-GR1 Gag polyprotein (438 aa).

3 stretches are compositionally biased toward polar residues: residues 1-11 (MESQQLHQNPH), 19-39 (ASVT…SASN), and 49-60 (KVNSQQETTPGT). Disordered stretches follow at residues 1 to 86 (MESQ…GQYQ), 360 to 403 (HSEY…ATSS), and 418 to 438 (VSSQ…TERI). The RNA-binding stretch occupies residues 295-397 (ENNINVSDRL…SSKPRAAKAH (103 aa)). Residues 369–381 (TSPNTTNTKVTTR) show a composition bias toward low complexity.

As to quaternary structure, homotrimer.

It is found in the cytoplasm. In terms of biological role, capsid protein (CA) is the structural component of the virus-like particle (VLP), forming the shell that encapsulates the retrotransposons dimeric RNA genome. The particles are assembled from trimer-clustered units and there are holes in the capsid shells that allow for the diffusion of macromolecules. CA also has nucleocapsid-like chaperone activity, promoting primer tRNA(i)-Met annealing to the multipartite primer-binding site (PBS), dimerization of Ty2 RNA and initiation of reverse transcription. The chain is Transposon Ty2-GR1 Gag polyprotein (TY2A-GR1) from Saccharomyces cerevisiae (strain ATCC 204508 / S288c) (Baker's yeast).